A 455-amino-acid chain; its full sequence is Probable transcription factor GLK1 (455 aa).

Residues Ala145–Glu163 show a composition bias toward low complexity. The segment at Ala145 to Val183 is disordered. Residues Lys169 to Ala181 show a composition bias toward basic residues. One can recognise an HTH myb-type domain in the interval Gly177–Lys236. Positions Pro207 to Arg232 form a DNA-binding region, H-T-H motif.

Expressed in leaves.

The protein localises to the nucleus. Its function is as follows. Probable transcriptional activator that promotes chloroplast development. Acts as an activator of nuclear photosynthetic genes involved in chlorophyll biosynthesis, light harvesting, and electron transport. This is Probable transcription factor GLK1 (GLK1) from Oryza sativa subsp. japonica (Rice).